The chain runs to 161 residues: 2-C-methyl-D-erythritol 2,4-cyclodiphosphate synthase (161 aa).

A divalent metal cation is bound by residues Asp-10 and His-12. 4-CDP-2-C-methyl-D-erythritol 2-phosphate contacts are provided by residues 10–12 and 36–37; these read DVH and HS. His-44 serves as a coordination point for a divalent metal cation. Residues 58–60, 63–67, and Arg-144 contribute to the 4-CDP-2-C-methyl-D-erythritol 2-phosphate site; these read DIG and FSDTD.

This sequence belongs to the IspF family. Homotrimer. The cofactor is a divalent metal cation.

The catalysed reaction is 4-CDP-2-C-methyl-D-erythritol 2-phosphate = 2-C-methyl-D-erythritol 2,4-cyclic diphosphate + CMP. It functions in the pathway isoprenoid biosynthesis; isopentenyl diphosphate biosynthesis via DXP pathway; isopentenyl diphosphate from 1-deoxy-D-xylulose 5-phosphate: step 4/6. Its function is as follows. Involved in the biosynthesis of isopentenyl diphosphate (IPP) and dimethylallyl diphosphate (DMAPP), two major building blocks of isoprenoid compounds. Catalyzes the conversion of 4-diphosphocytidyl-2-C-methyl-D-erythritol 2-phosphate (CDP-ME2P) to 2-C-methyl-D-erythritol 2,4-cyclodiphosphate (ME-CPP) with a corresponding release of cytidine 5-monophosphate (CMP). The sequence is that of 2-C-methyl-D-erythritol 2,4-cyclodiphosphate synthase from Burkholderia lata (strain ATCC 17760 / DSM 23089 / LMG 22485 / NCIMB 9086 / R18194 / 383).